Here is a 354-residue protein sequence, read N- to C-terminus: Uroporphyrinogen decarboxylase (354 aa).

Substrate is bound by residues 27–31 (RQAGR), D77, Y154, S209, and H327.

This sequence belongs to the uroporphyrinogen decarboxylase family. In terms of assembly, homodimer.

It localises to the cytoplasm. The enzyme catalyses uroporphyrinogen III + 4 H(+) = coproporphyrinogen III + 4 CO2. The protein operates within porphyrin-containing compound metabolism; protoporphyrin-IX biosynthesis; coproporphyrinogen-III from 5-aminolevulinate: step 4/4. Functionally, catalyzes the decarboxylation of four acetate groups of uroporphyrinogen-III to yield coproporphyrinogen-III. The chain is Uroporphyrinogen decarboxylase from Shewanella sp. (strain ANA-3).